The chain runs to 552 residues: Putative transport protein YE4162 (552 aa).

6 helical membrane passes run 1–21, 26–46, 65–85, 96–116, 119–139, and 158–178; these read MSAI…GLWI, VYGV…VGHF, FGLI…FFSS, FAIL…KLFA, LPII…LGAA, and MGYA…MWLI. RCK C-terminal domains follow at residues 192-276 and 279-361; these read EFDS…VVGE and DVTL…VVGN. 6 helical membrane passes run 371–391, 393–413, 439–459, 464–484, 493–513, and 530–550; these read MLPV…PLFI, GFPA…ALIL, IVLF…NTLV, LAWI…VGIL, YLTL…LAFA, and VYPL…VLFW.

The protein belongs to the AAE transporter (TC 2.A.81) family. YidE subfamily.

It localises to the cell membrane. This is Putative transport protein YE4162 from Yersinia enterocolitica serotype O:8 / biotype 1B (strain NCTC 13174 / 8081).